A 369-amino-acid polypeptide reads, in one-letter code: Transposase for insertion sequence element IS1201 (369 aa).

This sequence belongs to the transposase mutator family.

Functionally, required for the transposition of the insertion element. The protein is Transposase for insertion sequence element IS1201 of Lactobacillus helveticus (Lactobacillus suntoryeus).